The primary structure comprises 213 residues: Urease accessory protein UreG (213 aa).

G17–T24 provides a ligand contact to GTP.

The protein belongs to the SIMIBI class G3E GTPase family. UreG subfamily. In terms of assembly, homodimer. UreD, UreF and UreG form a complex that acts as a GTP-hydrolysis-dependent molecular chaperone, activating the urease apoprotein by helping to assemble the nickel containing metallocenter of UreC. The UreE protein probably delivers the nickel.

The protein localises to the cytoplasm. In terms of biological role, facilitates the functional incorporation of the urease nickel metallocenter. This process requires GTP hydrolysis, probably effectuated by UreG. This chain is Urease accessory protein UreG, found in Delftia acidovorans (strain DSM 14801 / SPH-1).